A 567-amino-acid chain; its full sequence is DNA ligase B (567 aa).

The N6-AMP-lysine intermediate role is filled by Lys-132.

Belongs to the NAD-dependent DNA ligase family. LigB subfamily.

It catalyses the reaction NAD(+) + (deoxyribonucleotide)n-3'-hydroxyl + 5'-phospho-(deoxyribonucleotide)m = (deoxyribonucleotide)n+m + AMP + beta-nicotinamide D-nucleotide.. Its function is as follows. Catalyzes the formation of phosphodiester linkages between 5'-phosphoryl and 3'-hydroxyl groups in double-stranded DNA using NAD as a coenzyme and as the energy source for the reaction. This chain is DNA ligase B, found in Yersinia pestis bv. Antiqua (strain Angola).